A 179-amino-acid chain; its full sequence is Enhancer of split m8 protein (179 aa).

One can recognise a bHLH domain in the interval 10–65 (YQKVKKPMLERQRRARMNKCLDNLKTLVAELRGDDGILRMDKAEMLESAVIFMRQQ). The Orange domain maps to 83–116 (FKNGYMNAVNEVSRVMASTPGMSVDLGKSVMTHL). The segment at 146 to 179 (DKAPLSPASSGYHSDCDSPAPSPQPMQQPLWRPW) is disordered. Positions 176–179 (WRPW) match the WRPW motif motif.

In terms of assembly, homodimer. Heterodimers with dpn. Transcription repression requires formation of a complex with a corepressor protein (Groucho).

Its subcellular location is the nucleus. In terms of biological role, participates in the control of cell fate choice by uncommitted neuroectodermal cells in the embryo. Transcriptional repressor. Binds DNA on N-box motifs: 5'-CACNAG-3'. Part of the Notch signaling pathway. The protein is Enhancer of split m8 protein of Drosophila melanogaster (Fruit fly).